The following is a 406-amino-acid chain: Ribulose bisphosphate carboxylase large chain (406 aa).

Substrate is bound by residues asparagine 101 and threonine 151. Residue lysine 153 is the Proton acceptor of the active site. Lysine 155 contacts substrate. 3 residues coordinate Mg(2+): lysine 179, aspartate 181, and glutamate 182. Position 179 is an N6-carboxylysine (lysine 179). Histidine 272 serves as the catalytic Proton acceptor. Substrate contacts are provided by arginine 273, histidine 305, and serine 357.

This sequence belongs to the RuBisCO large chain family. Type I subfamily. In terms of assembly, heterohexadecamer of 8 large chains and 8 small chains; disulfide-linked. The disulfide link is formed within the large subunit homodimers. Requires Mg(2+) as cofactor. Post-translationally, the disulfide bond which can form in the large chain dimeric partners within the hexadecamer appears to be associated with oxidative stress and protein turnover.

It localises to the plastid. The protein localises to the chloroplast. The catalysed reaction is 2 (2R)-3-phosphoglycerate + 2 H(+) = D-ribulose 1,5-bisphosphate + CO2 + H2O. The enzyme catalyses D-ribulose 1,5-bisphosphate + O2 = 2-phosphoglycolate + (2R)-3-phosphoglycerate + 2 H(+). In terms of biological role, ruBisCO catalyzes two reactions: the carboxylation of D-ribulose 1,5-bisphosphate, the primary event in carbon dioxide fixation, as well as the oxidative fragmentation of the pentose substrate in the photorespiration process. Both reactions occur simultaneously and in competition at the same active site. The polypeptide is Ribulose bisphosphate carboxylase large chain (rbcL) (Trichomanes striatum (Fern)).